The sequence spans 47 residues: MGQEPKGIESRKIQDGHVRKKVGRQQGLWVRTTKKEKFSRMSRDANV.

Basic and acidic residues-rich tracts occupy residues 1-17 and 33-47; these read MGQE…QDGH and TKKE…DANV. Positions 1–47 are disordered; sequence MGQEPKGIESRKIQDGHVRKKVGRQQGLWVRTTKKEKFSRMSRDANV.

In terms of biological role, involved in the control of extracellular enzymes production. Stimulates PEL, PEH, CEL, and PRT production. This chain is Exoenzymes regulatory protein AepH (aepH), found in Pectobacterium carotovorum subsp. carotovorum (Erwinia carotovora subsp. carotovora).